The chain runs to 250 residues: Peptidyl-tRNA hydrolase (250 aa).

Tyr-14 lines the tRNA pocket. His-19 acts as the Proton acceptor in catalysis. TRNA-binding residues include Phe-64, Asn-66, and Asn-112. Residues 192 to 250 are disordered; that stretch reads MGDGNQRPGGVKTDPAQLEKAPPKAQSHIRQARQNQKKPNIPESGPMAEMLKKLLGKKD. Residues 219 to 229 are compositionally biased toward polar residues; the sequence is HIRQARQNQKK. Positions 241-250 are enriched in basic and acidic residues; it reads MLKKLLGKKD.

The protein belongs to the PTH family. As to quaternary structure, monomer.

The protein localises to the cytoplasm. The catalysed reaction is an N-acyl-L-alpha-aminoacyl-tRNA + H2O = an N-acyl-L-amino acid + a tRNA + H(+). Its function is as follows. Hydrolyzes ribosome-free peptidyl-tRNAs (with 1 or more amino acids incorporated), which drop off the ribosome during protein synthesis, or as a result of ribosome stalling. Functionally, catalyzes the release of premature peptidyl moieties from peptidyl-tRNA molecules trapped in stalled 50S ribosomal subunits, and thus maintains levels of free tRNAs and 50S ribosomes. The chain is Peptidyl-tRNA hydrolase from Brucella suis (strain ATCC 23445 / NCTC 10510).